Reading from the N-terminus, the 254-residue chain is Peroxisomal membrane protein 11 homolog (254 aa).

Over Met-1 to Pro-91 the chain is Cytoplasmic. The helical transmembrane segment at Phe-92–Phe-112 threads the bilayer. Residues Asp-113–Lys-227 are Lumenal-facing. Residues Ile-228 to Ala-248 form a helical membrane-spanning segment. Residues Tyr-249–Lys-254 lie on the Cytoplasmic side of the membrane.

It belongs to the peroxin-11 family.

Its subcellular location is the peroxisome membrane. Involved in peroxisomal proliferation. Could participate in peroxisomal elongation or fission. May be involved in parceling of peroxisomes into regular quanta. This is Peroxisomal membrane protein 11 homolog (pex11) from Dictyostelium discoideum (Social amoeba).